The chain runs to 245 residues: UPF0246 protein LBUL_1917 (245 aa).

Belongs to the UPF0246 family.

In Lactobacillus delbrueckii subsp. bulgaricus (strain ATCC BAA-365 / Lb-18), this protein is UPF0246 protein LBUL_1917.